Reading from the N-terminus, the 361-residue chain is MGNITADNTSMNCDIDHTIHQTLAPVVYVMVLVVGFPANCLSLYYGYLQIKARNELGVYLCNLTVADLFYICSLPFWLQYVLQHDHWSHDDLSCQVCGILLYENIYISVGFLCCISIDRYLAVAHPFRFHQFRTLKAAMGVSALIWVKELLTSIYFLMHEEVVEDADRHRVCFEHYPLEPRQRGINYYRFLVGFLFPICLLLASYRGILRAVRRSHGTQKSRKDQIQRLVLSTVVIFLACFLPYHVLLLVRSLWESSCDFAKGIFNAYHFSLLLTSFNCVADPVLYCFVSETTHRDLARLRGACLAFLTCARTGRAREAYPLGAPEASGKSEDPEVLTRLHPAFQTPHPPGMGGSPAGGLS.

Residues 1-12 (MGNITADNTSMN) are Extracellular-facing. 2 N-linked (GlcNAc...) asparagine glycosylation sites follow: N3 and N8. A helical membrane pass occupies residues 13–49 (CDIDHTIHQTLAPVVYVMVLVVGFPANCLSLYYGYLQ). 2 disulfides stabilise this stretch: C13-C258 and C94-C172. Topologically, residues 50 to 53 (IKAR) are cytoplasmic. Residues 54–84 (NELGVYLCNLTVADLFYICSLPFWLQYVLQH) traverse the membrane as a helical segment. Over 85–89 (DHWSH) the chain is Extracellular. Residues 90–125 (DDLSCQVCGILLYENIYISVGFLCCISIDRYLAVAH) form a helical membrane-spanning segment. The Cytoplasmic segment spans residues 126–133 (PFRFHQFR). Residues 134 to 160 (TLKAAMGVSALIWVKELLTSIYFLMHE) traverse the membrane as a helical segment. Over 161–176 (EVVEDADRHRVCFEHY) the chain is Extracellular. The segment at 161 to 176 (EVVEDADRHRVCFEHY) is extracellular loop 2 (ECL2). Residues 177–214 (PLEPRQRGINYYRFLVGFLFPICLLLASYRGILRAVRR) traverse the membrane as a helical segment. The Cytoplasmic segment spans residues 215–218 (SHGT). A helical transmembrane segment spans residues 219–254 (QKSRKDQIQRLVLSTVVIFLACFLPYHVLLLVRSLW). At 255–260 (ESSCDF) the chain is on the extracellular side. The helical transmembrane segment at 261–289 (AKGIFNAYHFSLLLTSFNCVADPVLYCFV) threads the bilayer. At 290–361 (SETTHRDLAR…MGGSPAGGLS (72 aa)) the chain is on the cytoplasmic side. A disordered region spans residues 340–361 (LHPAFQTPHPPGMGGSPAGGLS). Over residues 351 to 361 (GMGGSPAGGLS) the composition is skewed to gly residues.

The protein belongs to the G-protein coupled receptor 1 family.

It is found in the cell membrane. With respect to regulation, activated by a network of residues that connects an extracellular-facing cavity to Glu-149, a conserved charged residue buried in the transmembrane core of the receptor. Protonation likely drives conformational changes in extracellular loop 2 (ECL2), which stabilizes movement of transmembrane 3 (TM3) and a series of rearrangements that connect the extracellular-facing cavity to Glu-149, a residue only conserved in proton-sensing G-protein coupled receptors. Activated in an allosteric manner by divalent metal ions at the extracellular surface following the order: Cd(2+) &gt; Co(2+) &gt; Ni(2+) &gt; Zn(2+) &gt; Fe(2+) &gt; Ca(2+) &gt; Mg(2+). Functionally, proton-sensing G-protein coupled receptor activated by extracellular pH, which is required to monitor pH changes and generate adaptive reactions. The receptor is almost silent at pH 7.8 but fully activated at pH 6.8. Ligand binding causes a conformation change that triggers signaling via guanine nucleotide-binding proteins (G proteins) and modulates the activity of downstream effectors, such as phospholipase C. GPR68 is mainly coupled to G(q) G proteins and mediates production of diacylglycerol (DAG) and inositol 1,4,5-trisphosphate (IP3). Acts as a key mechanosensor of fluid shear stress and membrane stretch. Expressed in endothelial cells of small-diameter resistance arteries, where it mediates flow-induced dilation in response to shear stress. May represents an osteoblastic pH sensor regulating cell-mediated responses to acidosis in bone. Acts as a regulator of calcium-sensing receptor CASR in a seesaw manner: GPR68-mediated signaling inhibits CASR signaling in response to protons, while CASR inhibits GPR68 in presence of extracellular calcium. The polypeptide is G-protein coupled receptor 68 (GPR68) (Bos taurus (Bovine)).